Here is a 1224-residue protein sequence, read N- to C-terminus: Dynactin subunit 1 (1224 aa).

Residues 1 to 10 show a composition bias toward basic residues; sequence MAQSRRHPHG. The segment at 1–30 is disordered; it reads MAQSRRHPHGRASSAGPRMSTEASSKPLKV. Positions 49 to 91 constitute a CAP-Gly domain; sequence GATLXATGKWVGVILDEAKGKNDGTVQGRKYFTCEENHGIFVR. Disordered stretches follow at residues 100-217, 374-402, and 888-918; these read DGAD…RSQV, SASEKQEHVKLQKQMEKKNTELESLRQQR, and PHCHHEQDATAMQEGEYDADRPQSKPTPPAE. Residues 117 to 146 show a composition bias toward basic residues; it reads VPKRHSRXAAKGSKLRGAKPKKTTARRPKP. Residues 148–180 are compositionally biased toward low complexity; sequence RTPTSAPSSGTAGPSGSASASGGEMSSSEPSTP. The stretch at 205–540 forms a coiled coil; sequence SPTKEEENLR…QEASAEKQQQ (336 aa). Residues 207–217 are compositionally biased toward basic and acidic residues; it reads TKEEENLRSQV. 2 coiled-coil regions span residues 936–1042 and 1081–1117; these read LKLE…EGLR and KDSPLLLQQIEALQLSIRHLKNENNRLKGAQMKLELA. The disordered stretch occupies residues 1203–1224; sequence WCSSSRARASPPASACSPPRPS. Over residues 1204–1224 the composition is skewed to low complexity; that stretch reads CSSSRARASPPASACSPPRPS.

This sequence belongs to the dynactin 150 kDa subunit family. As to quaternary structure, monomer and homodimer. Subunit of dynactin, a multiprotein complex part of a tripartite complex with dynein and a adapter, such as BICDL1, BICD2 or HOOK3. The dynactin complex is built around ACTR1A/ACTB filament and consists of an actin-related filament composed of a shoulder domain, a pointed end and a barbed end. Its length is defined by its flexible shoulder domain. The soulder is composed of 2 DCTN1 subunits, 4 DCTN2 and 2 DCTN3. DCTN1/p150(glued) binds directly to microtubules and to cytoplasmic dynein. As to expression, ubiquitously expressed.

It is found in the cytoplasm. Its subcellular location is the cytoskeleton. The protein resides in the microtubule organizing center. It localises to the centrosome. The protein localises to the centriole. It is found in the spindle. Its subcellular location is the cell cortex. Functionally, part of the dynactin complex that activates the molecular motor dynein for ultra-processive transport along microtubules. Plays a key role in dynein-mediated retrograde transport of vesicles and organelles along microtubules by recruiting and tethering dynein to microtubules. Binds to both dynein and microtubules providing a link between specific cargos, microtubules and dynein. Essential for targeting dynein to microtubule plus ends, recruiting dynein to membranous cargos and enhancing dynein processivity (the ability to move along a microtubule for a long distance without falling off the track). Can also act as a brake to slow the dynein motor during motility along the microtubule. Can regulate microtubule stability by promoting microtubule formation, nucleation and polymerization and by inhibiting microtubule catastrophe in neurons. Inhibits microtubule catastrophe by binding both to microtubules and to tubulin, leading to enhanced microtubule stability along the axon. Plays a role in metaphase spindle orientation. Plays a role in centriole cohesion and subdistal appendage organization and function. Its recruitment to the centriole in a KIF3A-dependent manner is essential for the maintenance of centriole cohesion and the formation of subdistal appendage. Also required for microtubule anchoring at the mother centriole. Plays a role in primary cilia formation. The chain is Dynactin subunit 1 (DCTN1) from Gallus gallus (Chicken).